Reading from the N-terminus, the 75-residue chain is F1845 fimbrial adhesin operon regulatory protein DaaF (75 aa).

In terms of biological role, may have a possible regulatory function on the expression of the other daa genes. In Escherichia coli, this protein is F1845 fimbrial adhesin operon regulatory protein DaaF (daaF).